Here is a 108-residue protein sequence, read N- to C-terminus: Large ribosomal subunit protein eL36x (108 aa).

2 disordered regions span residues 13–34 (GHVVTKREQPPRPNNRKGKTSK) and 75–108 (KLGTHKRAKRKREEMSSVLRKMRSGGAGASEKKK). Residues 75-84 (KLGTHKRAKR) show a composition bias toward basic residues.

The protein belongs to the eukaryotic ribosomal protein eL36 family.

This Arabidopsis thaliana (Mouse-ear cress) protein is Large ribosomal subunit protein eL36x (RPL36C).